Reading from the N-terminus, the 172-residue chain is Agamous-like MADS-box protein AGL29 (172 aa).

The 61-residue stretch at Met1–Asn61 folds into the MADS-box domain. Residues Asn86–Gly123 adopt a coiled-coil conformation. A disordered region spans residues Glu106–Glu125.

As to expression, expressed in pollen.

Its subcellular location is the nucleus. Probable transcription factor. This chain is Agamous-like MADS-box protein AGL29, found in Arabidopsis thaliana (Mouse-ear cress).